We begin with the raw amino-acid sequence, 221 residues long: Ras-related protein Rab-27A (221 aa).

At Ser2 the chain carries N-acetylserine. Ser2 carries the phosphoserine modification. Residue Gly16–Ser24 participates in GTP binding. The Effector region signature appears at Phe38–Phe46. GTP-binding positions include Asp74–Gln78, Asn133–Asp136, and Ser163–Ala165. A disulfide bridge connects residues Cys123 and Cys188. Residues Cys219 and Cys221 are each lipidated (S-geranylgeranyl cysteine). Cysteine methyl ester is present on Cys221.

This sequence belongs to the small GTPase superfamily. Rab family. As to quaternary structure, binds SYTL1, SLAC2B, MYRIP, SYTL3, SYTL4 and SYTL5. Interacts with RPH3A and RPH3A. Binds MLPH and SYTL2. Interacts with UNC13D. Does not interact with the BLOC-3 complex (heterodimer of HPS1 and HPS4). Interacts (GDP-bound form preferentially) with DENND10. As to expression, found in all the examined tissues except in brain. Low expression was found in thymus, kidney, muscle and placenta. Detected in melanocytes, and in most tumor cell lines examined. Expressed in cytotoxic T-lymphocytes (CTL) and mast cells.

The protein localises to the membrane. It is found in the melanosome. Its subcellular location is the late endosome. The protein resides in the lysosome. It catalyses the reaction GTP + H2O = GDP + phosphate + H(+). With respect to regulation, regulated by guanine nucleotide exchange factors (GEFs) which promote the exchange of bound GDP for free GTP, GTPase activating proteins (GAPs) which increase the GTP hydrolysis activity, and GDP dissociation inhibitors which inhibit the dissociation of the nucleotide from the GTPase. Activated by GEFs such as DENND10. Small GTPase which cycles between active GTP-bound and inactive GDP-bound states. In its active state, binds to a variety of effector proteins to regulate homeostasis of late endocytic pathway, including endosomal positioning, maturation and secretion. Plays a role in cytotoxic granule exocytosis in lymphocytes. Required for both granule maturation and granule docking and priming at the immunologic synapse. This Homo sapiens (Human) protein is Ras-related protein Rab-27A (RAB27A).